A 45-amino-acid chain; its full sequence is uncharacterized protein (45 aa).

This is an uncharacterized protein from Haemophilus influenzae (strain ATCC 51907 / DSM 11121 / KW20 / Rd).